The sequence spans 354 residues: Ferrochelatase (354 aa).

His-214 and Glu-295 together coordinate Fe cation.

Belongs to the ferrochelatase family.

The protein localises to the cytoplasm. It carries out the reaction heme b + 2 H(+) = protoporphyrin IX + Fe(2+). It participates in porphyrin-containing compound metabolism; protoheme biosynthesis; protoheme from protoporphyrin-IX: step 1/1. In terms of biological role, catalyzes the ferrous insertion into protoporphyrin IX. The polypeptide is Ferrochelatase (Burkholderia orbicola (strain MC0-3)).